Reading from the N-terminus, the 193-residue chain is Holliday junction branch migration complex subunit RuvA (193 aa).

Residues 1–64 are domain I; it reads MIGRIAGTLI…EDAHLLYGFG (64 aa). The interval 65 to 143 is domain II; the sequence is TAAERETFRQ…ADLGTVPGGP (79 aa). Positions 144-151 are flexible linker; the sequence is AVSDDAVD. The tract at residues 151-193 is domain III; it reads DVLNALLALGYSDKEAALAIKQVPAGTGVSEGIKLALKALSKG.

The protein belongs to the RuvA family. As to quaternary structure, homotetramer. Forms an RuvA(8)-RuvB(12)-Holliday junction (HJ) complex. HJ DNA is sandwiched between 2 RuvA tetramers; dsDNA enters through RuvA and exits via RuvB. An RuvB hexamer assembles on each DNA strand where it exits the tetramer. Each RuvB hexamer is contacted by two RuvA subunits (via domain III) on 2 adjacent RuvB subunits; this complex drives branch migration. In the full resolvosome a probable DNA-RuvA(4)-RuvB(12)-RuvC(2) complex forms which resolves the HJ.

The protein resides in the cytoplasm. Its function is as follows. The RuvA-RuvB-RuvC complex processes Holliday junction (HJ) DNA during genetic recombination and DNA repair, while the RuvA-RuvB complex plays an important role in the rescue of blocked DNA replication forks via replication fork reversal (RFR). RuvA specifically binds to HJ cruciform DNA, conferring on it an open structure. The RuvB hexamer acts as an ATP-dependent pump, pulling dsDNA into and through the RuvAB complex. HJ branch migration allows RuvC to scan DNA until it finds its consensus sequence, where it cleaves and resolves the cruciform DNA. The sequence is that of Holliday junction branch migration complex subunit RuvA from Ralstonia pickettii (strain 12J).